Reading from the N-terminus, the 272-residue chain is Digeranylgeranylglyceryl phosphate synthase (272 aa).

The next 8 helical transmembrane spans lie at 16–36 (AFIA…EIIL), 79–99 (ALYY…IISL), 100–120 (ENGI…YDLK), 124–144 (FIGN…GGLI), 148–168 (VNLG…REII), 194–214 (AVML…LLYY), 217–237 (IFSI…VYSA), and 252–272 (ISKY…MGAL).

It belongs to the UbiA prenyltransferase family. DGGGP synthase subfamily. Requires Mg(2+) as cofactor.

Its subcellular location is the cell membrane. It carries out the reaction sn-3-O-(geranylgeranyl)glycerol 1-phosphate + (2E,6E,10E)-geranylgeranyl diphosphate = 2,3-bis-O-(geranylgeranyl)-sn-glycerol 1-phosphate + diphosphate. The protein operates within membrane lipid metabolism; glycerophospholipid metabolism. In terms of biological role, prenyltransferase that catalyzes the transfer of the geranylgeranyl moiety of geranylgeranyl diphosphate (GGPP) to the C2 hydroxyl of (S)-3-O-geranylgeranylglyceryl phosphate (GGGP). This reaction is the second ether-bond-formation step in the biosynthesis of archaeal membrane lipids. This chain is Digeranylgeranylglyceryl phosphate synthase, found in Methanosphaera stadtmanae (strain ATCC 43021 / DSM 3091 / JCM 11832 / MCB-3).